The following is a 290-amino-acid chain: Endoplasmic reticulum-Golgi intermediate compartment protein 1 (290 aa).

At 1–26 (MPFDFRRFDIYRKVPKDLTQPTYTGA) the chain is on the cytoplasmic side. A helical transmembrane segment spans residues 27–47 (IISICCCLFITFLFLSELTGF). Residues 48-254 (IANEIVNELY…RRQPMYRFIT (207 aa)) are Lumenal-facing. N-linked (GlcNAc...) asparagine glycosylation is present at Asn-74. A helical transmembrane segment spans residues 255 to 275 (TVCAIIGGTFTVAGILDSFIF). Residues 276-290 (TASEAWKKIQLGKMQ) lie on the Cytoplasmic side of the membrane.

This sequence belongs to the ERGIC family.

It is found in the endoplasmic reticulum membrane. The protein localises to the endoplasmic reticulum-Golgi intermediate compartment membrane. It localises to the golgi apparatus membrane. Possible role in transport between endoplasmic reticulum and Golgi. This Xenopus laevis (African clawed frog) protein is Endoplasmic reticulum-Golgi intermediate compartment protein 1 (ergic1).